The sequence spans 74 residues: Consomatin Gh1 (74 aa).

Residues 1-22 form the signal peptide; it reads MQTACWVMVMMMVWITAPLSEG. Positions 23–57 are excised as a propeptide; that stretch reads GKLNDVIRGLVPDDVTPQLILRSLFFHRPSDSVVR. Residues cysteine 65 and cysteine 70 are joined by a disulfide bond. Residue tryptophan 67 is modified to D-tryptophan. 4-hydroxyproline is present on residues proline 71, proline 72, and proline 74.

It belongs to the conotoxin C superfamily. Consomatin family. Expressed by the venom duct.

The protein resides in the secreted. Moderately activates human somatostatin receptors (SSTR) with a preferential activation of SSTR1 and SSTR4. In vivo, does not cause behavioral changes in mice within a few minutes of intracranial injection, but causes a progressive loss of movement thereafter. Four to five hours after injection, mice recover, even with the highest dose tested. Shows antinociception and antihyperalgesia activities in two mouse models of acute pain, most probably by acting outside the central nervous system. The polypeptide is Consomatin Gh1 (Conus grahami (Cone snail)).